Here is a 230-residue protein sequence, read N- to C-terminus: Cytidylate kinase (230 aa).

Position 12 to 20 (12 to 20) interacts with ATP; it reads GPSGTGKST.

Belongs to the cytidylate kinase family. Type 1 subfamily.

Its subcellular location is the cytoplasm. It carries out the reaction CMP + ATP = CDP + ADP. The enzyme catalyses dCMP + ATP = dCDP + ADP. This Corynebacterium efficiens (strain DSM 44549 / YS-314 / AJ 12310 / JCM 11189 / NBRC 100395) protein is Cytidylate kinase.